Consider the following 161-residue polypeptide: Cyclic pyranopterin monophosphate synthase (161 aa).

Substrate-binding positions include 75–77 (MCH) and 115–116 (ME). Aspartate 130 is a catalytic residue.

Belongs to the MoaC family. As to quaternary structure, homohexamer; trimer of dimers.

It carries out the reaction (8S)-3',8-cyclo-7,8-dihydroguanosine 5'-triphosphate = cyclic pyranopterin phosphate + diphosphate. Its pathway is cofactor biosynthesis; molybdopterin biosynthesis. Functionally, catalyzes the conversion of (8S)-3',8-cyclo-7,8-dihydroguanosine 5'-triphosphate to cyclic pyranopterin monophosphate (cPMP). This chain is Cyclic pyranopterin monophosphate synthase, found in Bacillus cereus (strain ATCC 10987 / NRS 248).